The following is a 42-amino-acid chain: Beta-2-microglobulin (42 aa).

An Ig-like C1-type domain is found at proline 5 to residue 42.

Heterodimer of an alpha chain and a beta chain. Beta-2-microglobulin is the beta-chain of major histocompatibility complex class I molecules.

The protein localises to the secreted. In terms of biological role, component of the class I major histocompatibility complex (MHC). Involved in the presentation of peptide antigens to the immune system. This Canis lupus familiaris (Dog) protein is Beta-2-microglobulin (B2M).